The following is a 180-amino-acid chain: Stathmin-3 (180 aa).

S-palmitoyl cysteine attachment occurs at residues Cys-22 and Cys-24. An SLD domain is found at 38–180; the sequence is GDMEVKQLDK…NKEQREEMSG (143 aa). Ser-50, Ser-60, Ser-65, Ser-68, Ser-72, Ser-73, and Ser-81 each carry phosphoserine. Residues 59–82 form a disordered region; that stretch reads KSPSDLSPESPMLSSPPKKKDTSL. Low complexity predominate over residues 60–74; sequence SPSDLSPESPMLSSP. Positions 75–179 form a coiled coil; that stretch reads PKKKDTSLEE…RNKEQREEMS (105 aa).

This sequence belongs to the stathmin family. As to quaternary structure, interacts with STAT3. Interacts with CLU (secreted form); this interaction may act as an important modulator during neuronal differentiation. N-terminal palmitoylation promotes specific anchoring to the cytosolic leaflet of Golgi membranes and subsequent vesicular trafficking along dendrites and axons. Neuronal Stathmins are substrates for palmitoyltransferases ZDHHC3, ZDHHC7 and ZDHHC15. As to expression, neuron specific.

Its subcellular location is the golgi apparatus. It localises to the cell projection. The protein resides in the growth cone. The protein localises to the axon. It is found in the cytoplasm. Its subcellular location is the cytosol. Exhibits microtubule-destabilizing activity, which is antagonized by STAT3. This Homo sapiens (Human) protein is Stathmin-3 (STMN3).